Here is a 135-residue protein sequence, read N- to C-terminus: Helix-loop-helix protein 2 (135 aa).

The interval 1–81 (MMLSPDQAAD…RRATAKYRSA (81 aa)) is disordered. Positions 10 to 21 (DSDHPSSTHSDP) are enriched in basic and acidic residues. The segment covering 68–81 (KRRRRRATAKYRSA) has biased composition (basic residues). Residues 77–129 (KYRSAHATRERIRVEAFNLAFAELRKLLPTLPPDKKLSKIEILRLAICYISYL) enclose the bHLH domain.

Homodimer. Interacts and may form heterodimers with STAT3. In terms of tissue distribution, expressed in developing neurons. Transiently expressed in the cerebellum during postnatal development, exclusively in the premigratory zone of the external granule layer where postmitotic neurons undergo initial stages of neuronal differentiation. Expression is not detected in mature neurons. Expressed in the anterior lobe of the adult pituitary.

It is found in the nucleus. Its function is as follows. Transcription factor which binds the E box motif 5'-CA[TC][AG]TG-3'. Involved in regulating energy expenditure, body mass, voluntary physical activity, mating behavior and reproductive longevity, acting through the hypothalamic-pituitary-gonadal axis. Acts as a transcriptional activator of target genes, including Ndn, Pcsk1, Mc4r. Is also a transcriptional activator of KISS1. May act centrally to regulate function of both white and brown adipose tissue. Together with NHLH1, required to maintain migration and survival of cells in the anterior extramural migration stream (aes), which forms the precerebellar nuclei. Also, in concert with Nhlh1, may determine fate of gonadotropin releasing hormone-1 (GnRH-1) neurons. This Mus musculus (Mouse) protein is Helix-loop-helix protein 2 (Nhlh2).